Reading from the N-terminus, the 433-residue chain is MIKRLRGLLVLLCCVAGMAMAEEKNILVTSGSDRATPIAVVPFGVQGGSVLPEDMADIISNDLRNSGYYGPIPRQNMISLPTQASEVIFRDWKALGAQYVMVGSIVPSGGRLQVSYALFNVATEQQVLTGSVAGGVDQLRDMAHYIADQSFEKLTGIKGAFSTRMLYVTAERFSTNNTRYTLQRSDYDGARAVTLLQSREPILSPRFAPDGKRIAYVSFEQKRPRIFIQHIDTGRREQITNFEGLNGAPAWSPDGTRLAFVLSKDGNPDIYVMNVASRQITRVTAGPGINTEPFWGKDGNTLYFTSDRGGKPQIYKQSVGGGGAERVTFVGNYNANPKLSADEKTLVMIHRQQGFTNFKVAAQDLQRGSVKILTETSLDESPTVAPNGTMLIYATRQQGRGVLMLVSLNGRVRLPLPTAQGEVREPSWSPYLN.

An N-terminal signal peptide occupies residues 1 to 21 (MIKRLRGLLVLLCCVAGMAMA).

The protein belongs to the TolB family. As to quaternary structure, the Tol-Pal system is composed of five core proteins: the inner membrane proteins TolA, TolQ and TolR, the periplasmic protein TolB and the outer membrane protein Pal. They form a network linking the inner and outer membranes and the peptidoglycan layer.

The protein resides in the periplasm. Functionally, part of the Tol-Pal system, which plays a role in outer membrane invagination during cell division and is important for maintaining outer membrane integrity. The chain is Tol-Pal system protein TolB from Pseudomonas entomophila (strain L48).